A 742-amino-acid chain; its full sequence is Hapless 2 (742 aa).

A signal peptide spans 1–19 (MKFLAFGLIYFHFCILNRC). The Extracellular portion of the chain corresponds to 20-540 (EYITSSTIQK…CYFSAGCIKE (521 aa)). Disulfide bonds link cysteine 30–cysteine 40, cysteine 118–cysteine 147, cysteine 129–cysteine 182, cysteine 148–cysteine 312, cysteine 150–cysteine 168, cysteine 295–cysteine 319, and cysteine 431–cysteine 470. An important for membrane fusion region spans residues 152–179 (LSDILGMGNDLSRGKVCYALNLGAGSAT). Residues 541–561 (AFKSIASIAGVASALALVIFL) form a helical membrane-spanning segment. The Cytoplasmic portion of the chain corresponds to 562–742 (AKNGYLVPII…STSPLYLLIE (181 aa)).

The protein belongs to the HAP2/GCS1 family.

Its subcellular location is the cell membrane. It localises to the cell junction. Functionally, during fertilization, required for the formation of intercellular membrane pores and subsequent exchange of gametic pronuclei between cells. Probably initiates the formation of intercellular membrane pores by inserting part of its extracellular domain into the cell membrane of the adjoining cell in the mating pair. Mating requires the presence of HAP2 on at least one of the two cells. Mating efficiency is high when HAP2 is present on both cells, and is strongly reduced when HAP2 is present on only one of the two cells. In Tetrahymena thermophila, this protein is Hapless 2.